Consider the following 505-residue polypeptide: Probable inorganic carbon transporter subunit DabB (505 aa).

13 helical membrane-spanning segments follow: residues 9–29, 37–57, 68–88, 105–123, 162–182, 204–224, 231–251, 259–279, 303–323, 355–375, 382–402, 410–430, and 446–466; these read SLLTLFFIMLMASGISGLLFL, FVRIHIGILALPLLVSLLILA, WHLDSLACLMTFFVLAIGFII, YFTLFTFTTGAASMTWLSG, LFLLSWFSLFFAMMWLFHATG, TGIQLLIVLAVIIPAAQWPFQ, IVAPTPVSAIMHAGLVNAGGI, LFHGGIASIILLLLASISVLI, GFMLIQCALGAYIAAIIHLIL, LWVMAGRILSLVIGVAFWLTA, LISALILGWSLSVSWDQLVAF, IAGLTVLGGAALVYFIIHHLF, and MSAVMIVVCLLLFGSALGTWV.

Belongs to the inorganic carbon transporter (TC 9.A.2) DabB family. In terms of assembly, forms a complex with DabA.

The protein localises to the cell membrane. Its function is as follows. Part of an energy-coupled inorganic carbon pump. The chain is Probable inorganic carbon transporter subunit DabB from Bacillus subtilis (strain 168).